Reading from the N-terminus, the 314-residue chain is Porphobilinogen deaminase (314 aa).

Cys-243 is subject to S-(dipyrrolylmethanemethyl)cysteine.

This sequence belongs to the HMBS family. As to quaternary structure, monomer. The cofactor is dipyrromethane.

It carries out the reaction 4 porphobilinogen + H2O = hydroxymethylbilane + 4 NH4(+). The protein operates within porphyrin-containing compound metabolism; protoporphyrin-IX biosynthesis; coproporphyrinogen-III from 5-aminolevulinate: step 2/4. In terms of biological role, tetrapolymerization of the monopyrrole PBG into the hydroxymethylbilane pre-uroporphyrinogen in several discrete steps. This Bordetella bronchiseptica (strain ATCC BAA-588 / NCTC 13252 / RB50) (Alcaligenes bronchisepticus) protein is Porphobilinogen deaminase.